The sequence spans 326 residues: Glycerol-3-phosphate dehydrogenase [NAD(P)+] (326 aa).

NADPH-binding residues include tryptophan 15, arginine 35, and lysine 107. Residues lysine 107, glycine 135, and serine 137 each contribute to the sn-glycerol 3-phosphate site. Alanine 139 serves as a coordination point for NADPH. Residues lysine 190, aspartate 243, serine 253, arginine 254, and asparagine 255 each coordinate sn-glycerol 3-phosphate. The Proton acceptor role is filled by lysine 190. Arginine 254 serves as a coordination point for NADPH. Leucine 273 and glutamate 275 together coordinate NADPH.

It belongs to the NAD-dependent glycerol-3-phosphate dehydrogenase family.

The protein resides in the cytoplasm. It carries out the reaction sn-glycerol 3-phosphate + NAD(+) = dihydroxyacetone phosphate + NADH + H(+). It catalyses the reaction sn-glycerol 3-phosphate + NADP(+) = dihydroxyacetone phosphate + NADPH + H(+). The protein operates within membrane lipid metabolism; glycerophospholipid metabolism. Catalyzes the reduction of the glycolytic intermediate dihydroxyacetone phosphate (DHAP) to sn-glycerol 3-phosphate (G3P), the key precursor for phospholipid synthesis. The protein is Glycerol-3-phosphate dehydrogenase [NAD(P)+] of Bradyrhizobium diazoefficiens (strain JCM 10833 / BCRC 13528 / IAM 13628 / NBRC 14792 / USDA 110).